The primary structure comprises 308 residues: 4-hydroxyproline 2-epimerase (308 aa).

Cys88 acts as the Proton acceptor in catalysis. Substrate is bound by residues 89–90, His208, and Asp232; that span reads GH. Residue Cys236 is the Proton donor of the active site. 237 to 238 lines the substrate pocket; the sequence is GT.

It belongs to the proline racemase family.

It carries out the reaction trans-4-hydroxy-L-proline = cis-4-hydroxy-D-proline. Functionally, catalyzes the epimerization of trans-4-hydroxy-L-proline (t4LHyp) to cis-4-hydroxy-D-proline (c4DHyp). Is likely involved in a degradation pathway that converts t4LHyp to alpha-ketoglutarate. Can also catalyze the epimerization of trans-3-hydroxy-L-proline (t3LHyp) to cis-3-hydroxy-D-proline (c3DHyp), albeit with 19-fold lower efficiency. Displays no proline racemase activity. The chain is 4-hydroxyproline 2-epimerase from Chromobacterium violaceum (strain ATCC 12472 / DSM 30191 / JCM 1249 / CCUG 213 / NBRC 12614 / NCIMB 9131 / NCTC 9757 / MK).